Consider the following 957-residue polypeptide: Ribonuclease 3-like protein 3 (957 aa).

An RNase III 1 domain is found at 4–142; that stretch reads VEAVEKILNY…IAATVFIDVN (139 aa). Residues 307–382 enclose the DRBM 1 domain; the sequence is NGRGELIEIC…AYHMIRALES (76 aa). Residues 415–551 enclose the RNase III 2 domain; the sequence is VEAVEKILNY…VAGAVYIDVK (137 aa). 2 DRBM domains span residues 566-645 and 837-912; these read EPIY…KLSE and DEKG…ALES.

Its function is as follows. Ribonuclease that cleaves double-stranded RNA (dsRNA). The sequence is that of Ribonuclease 3-like protein 3 (RTL3) from Arabidopsis thaliana (Mouse-ear cress).